Reading from the N-terminus, the 423-residue chain is Salicylate 5-hydroxylase, large oxygenase component (423 aa).

The disordered stretch occupies residues 1-20; the sequence is MSEPQRLKPVFPQDPKWPGE. The region spanning 49-168 is the Rieske domain; sequence WCYVGLEAEI…VAARGGAVFA (120 aa). Residues C91, H93, C111, and H114 each contribute to the [2Fe-2S] cluster site. Fe cation contacts are provided by H224, H229, and D370.

The protein belongs to the bacterial ring-hydroxylating dioxygenase alpha subunit family. As to quaternary structure, the salicylate 5-hydroxylase (S5H) multicomponent enzyme system is composed of an electron transfer component and an oxygenase component. The electron transfer component is comprised of a ferredoxin reductase (NagAa) and a ferredoxin (NagAb), and the oxygenase component is formed by a large subunit (NagG) and a small subunit (NagH). The cofactor is Fe cation. [2Fe-2S] cluster serves as cofactor.

The enzyme catalyses salicylate + NADH + O2 + H(+) = 2,5-dihydroxybenzoate + NAD(+) + H2O. The protein operates within aromatic compound metabolism; naphthalene degradation. Its function is as follows. Oxygenase component of the salicylate 5-hydroxylase (S5H) multicomponent enzyme system which catalyzes the 5-hydroxylation of salicylate to gentisate. Active only on substrates with a ring-substituted carboxylate group with an adjacent hydroxyl group. Primarily active against salicylate and substituted salicylates, but not against 2-hydroxycinnamate, 3-hydroxycinnamate, 2-hydroxyphenylacetate, 3-hydroxyphenylacetate, 2-hydroxybenzophenone, 1-hydroxy-2-naphthoate, 4-methoxysalicylate or 2-hydroxyacetophenone. The sequence is that of Salicylate 5-hydroxylase, large oxygenase component from Ralstonia sp.